The primary structure comprises 111 residues: Disintegrin DS-AS (111 aa).

Residues 1-20 (MIQVLLVIICLAVFPYQGSC) form the signal peptide. The propeptide occupies 21 to 47 (IILESGNVNDYEIVYPKKLIVLPTGAM). In terms of domain architecture, Disintegrin spans 47–111 (MNSPHPCCDP…PDCPRNPYKD (65 aa)). Cystine bridges form between cysteine 53-cysteine 76, cysteine 67-cysteine 73, cysteine 72-cysteine 97, and cysteine 85-cysteine 104. The Cell attachment site signature appears at 89-91 (RGD).

Heterodimer; disulfide-linked.

Its subcellular location is the secreted. Its function is as follows. Inhibits ADP-induced platelet aggregation in human platelet-rich plasma (IC(50) is 8 uM). This Atheris squamigera (Variable bush viper) protein is Disintegrin DS-AS.